The primary structure comprises 336 residues: Tryptophan--tRNA ligase (336 aa).

ATP-binding positions include 13–15 (QPS) and 21–22 (GN). The short motif at 14–22 (PSGNLTIGN) is the 'HIGH' region element. L-tryptophan is bound at residue Asp-140. Residues 152–154 (GQD), Ile-191, and 200–204 (KMSKS) each bind ATP. Residues 200–204 (KMSKS) carry the 'KMSKS' region motif.

This sequence belongs to the class-I aminoacyl-tRNA synthetase family. In terms of assembly, homodimer.

Its subcellular location is the cytoplasm. It carries out the reaction tRNA(Trp) + L-tryptophan + ATP = L-tryptophyl-tRNA(Trp) + AMP + diphosphate + H(+). Its function is as follows. Catalyzes the attachment of tryptophan to tRNA(Trp). The protein is Tryptophan--tRNA ligase of Buchnera aphidicola subsp. Schizaphis graminum (strain Sg).